The primary structure comprises 54 residues: Low temperature-induced protein lt101.2 (54 aa).

2 helical membrane-spanning segments follow: residues 2–22 (ASATFIEVILAIILPPVGVFL) and 34–54 (LLLTLLGYIPGIIYAVYVLVA).

It belongs to the UPF0057 (PMP3) family.

The protein resides in the membrane. In Hordeum vulgare (Barley), this protein is Low temperature-induced protein lt101.2 (LT101.2).